The primary structure comprises 36 residues: Photosystem I reaction center subunit VIII (36 aa).

Residues Ser8–Leu28 traverse the membrane as a helical segment.

It belongs to the PsaI family.

The protein localises to the plastid. It is found in the chloroplast thylakoid membrane. Functionally, may help in the organization of the PsaL subunit. In Vitis vinifera (Grape), this protein is Photosystem I reaction center subunit VIII.